Here is a 349-residue protein sequence, read N- to C-terminus: Putative methylesterase 12, chloroplastic (349 aa).

Residues 1–77 (MGNRVICMKK…GSTSSRRGTL (77 aa)) constitute a chloroplast transit peptide. Residues 61 to 80 (GSMSRRIGSTSSRRGTLSDS) are disordered. S173 (acyl-ester intermediate) is an active-site residue. Catalysis depends on charge relay system residues D300 and H328.

Belongs to the AB hydrolase superfamily. Methylesterase family.

Its subcellular location is the plastid. It localises to the chloroplast. Functionally, putative methylesterase. The polypeptide is Putative methylesterase 12, chloroplastic (Arabidopsis thaliana (Mouse-ear cress)).